We begin with the raw amino-acid sequence, 257 residues long: MSQIEFKDVRKVYSNGHVGLDRINLNIEKGDFAVIVGLSGSGKSTLLRSINRLHDITEGEILIDGKSMTKASGNQLLEMRRNIGMIFQNFNLVKRSSVMRNVLSGRVGYHPTWKMVLGLFPKEDKIKALEALDRVNILDKYKSRSDELSGGQQQRISIARALCQEPAIILADEPVASLDPLTTKQVMDDLKRINQELGITIIINLHFVDLAREYGTRIIGLRDGQLVFDGPVERATDEAFNEIYGRSIQDEEKLGVN.

An ABC transporter domain is found at 4-248 (IEFKDVRKVY…AFNEIYGRSI (245 aa)). Position 37 to 44 (37 to 44 (GLSGSGKS)) interacts with ATP.

This sequence belongs to the ABC transporter superfamily. Phosphonates importer (TC 3.A.1.9.1) family. In terms of assembly, the complex is composed of two ATP-binding proteins (PhnC), two transmembrane proteins (PhnE) and a solute-binding protein (PhnD).

It localises to the cell membrane. It catalyses the reaction phosphonate(out) + ATP + H2O = phosphonate(in) + ADP + phosphate + H(+). Functionally, part of the ABC transporter complex PhnCDE involved in phosphonates import. Responsible for energy coupling to the transport system. The sequence is that of Phosphonates import ATP-binding protein PhnC from Staphylococcus saprophyticus subsp. saprophyticus (strain ATCC 15305 / DSM 20229 / NCIMB 8711 / NCTC 7292 / S-41).